Consider the following 466-residue polypeptide: 3-isopropylmalate dehydratase large subunit (466 aa).

3 residues coordinate [4Fe-4S] cluster: C347, C407, and C410.

It belongs to the aconitase/IPM isomerase family. LeuC type 1 subfamily. Heterodimer of LeuC and LeuD. [4Fe-4S] cluster is required as a cofactor.

The catalysed reaction is (2R,3S)-3-isopropylmalate = (2S)-2-isopropylmalate. Its pathway is amino-acid biosynthesis; L-leucine biosynthesis; L-leucine from 3-methyl-2-oxobutanoate: step 2/4. Catalyzes the isomerization between 2-isopropylmalate and 3-isopropylmalate, via the formation of 2-isopropylmaleate. This is 3-isopropylmalate dehydratase large subunit from Escherichia coli O17:K52:H18 (strain UMN026 / ExPEC).